The following is a 400-amino-acid chain: Phosphoglycerate kinase (400 aa).

Substrate contacts are provided by residues 23 to 25 (DLN), arginine 38, 61 to 64 (HFGR), arginine 120, and arginine 153. ATP is bound by residues lysine 203, glutamate 325, and 355 to 358 (GGDT).

This sequence belongs to the phosphoglycerate kinase family. In terms of assembly, monomer.

The protein resides in the cytoplasm. The catalysed reaction is (2R)-3-phosphoglycerate + ATP = (2R)-3-phospho-glyceroyl phosphate + ADP. It functions in the pathway carbohydrate degradation; glycolysis; pyruvate from D-glyceraldehyde 3-phosphate: step 2/5. This chain is Phosphoglycerate kinase, found in Methylorubrum populi (strain ATCC BAA-705 / NCIMB 13946 / BJ001) (Methylobacterium populi).